The chain runs to 38 residues: Photosystem II reaction center protein X (38 aa).

A helical membrane pass occupies residues 8–28 (FLWSLVAGAVVLGALFGAIIF).

Belongs to the PsbX family. Type 1 subfamily. As to quaternary structure, PSII is composed of 1 copy each of membrane proteins PsbA, PsbB, PsbC, PsbD, PsbE, PsbF, PsbH, PsbI, PsbJ, PsbK, PsbL, PsbM, PsbT, PsbX, PsbY, PsbZ, Psb30/Ycf12, peripheral proteins PsbO, CyanoQ (PsbQ), PsbU, PsbV and a large number of cofactors. It forms dimeric complexes.

The protein localises to the cellular thylakoid membrane. Its function is as follows. Involved in the binding and/or turnover of quinones at the Q(B) site of photosystem II (PSII). PSII is a light-driven water plastoquinone oxidoreductase, using light energy to abstract electrons from H(2)O, generating a proton gradient subsequently used for ATP formation. This is Photosystem II reaction center protein X from Synechococcus sp. (strain JA-2-3B'a(2-13)) (Cyanobacteria bacterium Yellowstone B-Prime).